Consider the following 949-residue polypeptide: Glycine dehydrogenase (decarboxylating) (949 aa).

K704 is subject to N6-(pyridoxal phosphate)lysine.

The protein belongs to the GcvP family. As to quaternary structure, the glycine cleavage system is composed of four proteins: P, T, L and H. The cofactor is pyridoxal 5'-phosphate.

The enzyme catalyses N(6)-[(R)-lipoyl]-L-lysyl-[glycine-cleavage complex H protein] + glycine + H(+) = N(6)-[(R)-S(8)-aminomethyldihydrolipoyl]-L-lysyl-[glycine-cleavage complex H protein] + CO2. The glycine cleavage system catalyzes the degradation of glycine. The P protein binds the alpha-amino group of glycine through its pyridoxal phosphate cofactor; CO(2) is released and the remaining methylamine moiety is then transferred to the lipoamide cofactor of the H protein. This is Glycine dehydrogenase (decarboxylating) from Bacteroides thetaiotaomicron (strain ATCC 29148 / DSM 2079 / JCM 5827 / CCUG 10774 / NCTC 10582 / VPI-5482 / E50).